The primary structure comprises 163 residues: Secreted RxLR effector protein 135 (163 aa).

Positions 1–20 are cleaved as a signal peptide; the sequence is MRRLYLFVLILATFLTTSHG. Residues 33-45 carry the RxLR-dEER motif; that stretch reads RGLQEEAGEDEER. Residues 94-127 form a disordered region; that stretch reads KNAGKPKRQTPQIAATGPAKPKVQSPEEAAAVPG.

Belongs to the RxLR effector family.

It is found in the secreted. Its subcellular location is the host nucleus. The protein resides in the host cytoplasm. Secreted effector that completely suppresses the host cell death induced by cell death-inducing proteins. The protein is Secreted RxLR effector protein 135 of Plasmopara viticola (Downy mildew of grapevine).